The sequence spans 335 residues: ATP-dependent 6-phosphofructokinase (335 aa).

Glycine 11 contacts ATP. 21–25 (RAVVR) is an ADP binding site. Residues 72–73 (RY) and 102–105 (GDGS) contribute to the ATP site. Mg(2+) is bound at residue aspartate 103. Position 125-127 (125-127 (TID)) interacts with substrate. Residue aspartate 127 is the Proton acceptor of the active site. Arginine 154 lines the ADP pocket. Residues arginine 162 and 169-171 (MGR) contribute to the substrate site. Residues 185-187 (GAD) and 213-215 (KKH) contribute to the ADP site. Residues glutamate 222, arginine 244, and 250–253 (HIQR) contribute to the substrate site.

It belongs to the phosphofructokinase type A (PFKA) family. ATP-dependent PFK group I subfamily. Prokaryotic clade 'B1' sub-subfamily. As to quaternary structure, homotetramer. Mg(2+) is required as a cofactor.

It is found in the cytoplasm. The enzyme catalyses beta-D-fructose 6-phosphate + ATP = beta-D-fructose 1,6-bisphosphate + ADP + H(+). Its pathway is carbohydrate degradation; glycolysis; D-glyceraldehyde 3-phosphate and glycerone phosphate from D-glucose: step 3/4. Its activity is regulated as follows. Allosterically activated by ADP and other diphosphonucleosides, and allosterically inhibited by phosphoenolpyruvate. In terms of biological role, catalyzes the phosphorylation of D-fructose 6-phosphate to fructose 1,6-bisphosphate by ATP, the first committing step of glycolysis. The protein is ATP-dependent 6-phosphofructokinase of Streptococcus pneumoniae serotype 4 (strain ATCC BAA-334 / TIGR4).